The chain runs to 536 residues: Caspase recruitment domain-containing protein 9 (536 aa).

S2 is subject to Phosphoserine. 3 residues coordinate Zn(2+): D3, C10, and H73. In terms of domain architecture, CARD spans 6–98 (NDDECWSVLE…QLYKKVTGKE (93 aa)). Residues 99–116 (PARVFSMIIDASGESGLT) form a linker region. 2 coiled-coil regions span residues 117–277 (QLLM…DRSS) and 332–419 (LRKD…QQLE). Residue K125 forms a Glycyl lysine isopeptide (Lys-Gly) (interchain with G-Cter in ubiquitin) linkage. Residue T231 is modified to Phosphothreonine. S277 carries the phosphoserine modification. Phosphoserine occurs at positions 424, 425, 431, 450, 460, 483, and 498. A disordered region spans residues 427 to 536 (LEDGSPRRSQ…GSDNTDTEGS (110 aa)). Over residues 487–502 (PPEKERRRLKESFENY) the composition is skewed to basic and acidic residues. The segment covering 503-513 (RRKRALRKMQK) has biased composition (basic residues). T531 and T533 each carry phosphothreonine; by CK2.

Monomer. Homodimer; homodimerization is mediated by the CARD domain which forms an extensive interaction with the adjacent linker and coiled-coil regions; leads to an autoinhibited state. Homomultimer; polymerizes following activation, forming a nucleating helical template that seeds BCL10-filament formation via a CARD-CARD interaction. Interacts (via CARD domain) with BCL10 (via CARD domain); interaction takes place following CARD9 activation and polymerization, leading to the formation of a filamentous CBM complex assembly. Component of a CBM complex (CARD9-BCL10, MALT1), composed of CARD9, BCL10 and MALT1. Interacts with RASGRF1. Interacts with NOD2 (via NACHT domain); interaction is direct. Interacts with RIPK2. Interacts with VHL; without leading to protein degradation. In terms of processing, phosphorylated at Thr-231 by PRKCD downstream of C-type lectin receptors activation: phosphorylation promotes interaction with BCL10, followed by activation of NF-kappa-B and MAP kinase p38 pathways. Phosphorylated at Thr-531 and Thr-533 by CK2 following interaction with VHL, leading to inhibit the ability to activate NF-kappa-B. Ubiquitinated at Lys-125 via 'Lys-27'-linked ubiquitin by TRIM62 downstream of C-type lectin receptors activation; leading to CARD9 activation, followed by activation of NF-kappa-B and MAP kinase p38 pathways. Deubiquitinated at Lys-125 by USP15, inhibiting CARD9. In terms of tissue distribution, expression is restricted to several populations of phagocytes, such as macrophages, monocytes, and dendritic cells. Highly expressed in spleen. Also detected in liver, placenta, lung, peripheral blood leukocytes and in brain.

Its subcellular location is the cytoplasm. Its activity is regulated as follows. Maintained in an autoinhibited state via homodimerization in which the CARD domain forms an extensive interaction with the adjacent linker and coiled-coil regions. Activation downstream of C-type lectin receptors, by phosphorylation by PRKCD and/or ubiquitination by TRIM62, triggers disruption of the CARD domain-coiled coil interface, CARD9 homooligomerization and BCL10 recruitment, followed by activation of NF-kappa-B and MAP kinase p38 pathways. Zinc-binding inhibits activation by stabilizing the CARD ground-state conformation and restricting its capacity to form BCL10-nucleating filaments. In terms of biological role, adapter protein that plays a key role in innate immune response against fungi by forming signaling complexes downstream of C-type lectin receptors. CARD9-mediated signals are essential for antifungal immunity against a subset of fungi from the phylum Ascomycota. Transduces signals in myeloid cells downstream of C-type lectin receptors CLEC7A (dectin-1), CLEC6A (dectin-2) and CLEC4E (Mincle), which detect pathogen-associated molecular pattern metabolites (PAMPs), such as fungal carbohydrates, and trigger CARD9 activation. Upon activation, CARD9 homooligomerizes to form a nucleating helical template that recruits BCL10 via CARD-CARD interaction, thereby promoting polymerization of BCL10 and subsequent recruitment of MALT1: this leads to activation of NF-kappa-B and MAP kinase p38 (MAPK11, MAPK12, MAPK13 and/or MAPK14) pathways which stimulate expression of genes encoding pro-inflammatory cytokines and chemokines. CARD9 signaling in antigen-presenting cells links innate sensing of fungi to the activation of adaptive immunity and provides a cytokine milieu that induces the development and subsequent of interleukin 17-producing T helper (Th17) cells. Also involved in activation of myeloid cells via classical ITAM-associated receptors and TLR: required for TLR-mediated activation of MAPK, while it is not required for TLR-induced activation of NF-kappa-B. CARD9 can also be engaged independently of BCL10: forms a complex with RASGRF1 downstream of C-type lectin receptors, which recruits and activates HRAS, leading to ERK activation and the production of cytokines. Acts as an important regulator of the intestinal commensal fungi (mycobiota) component of the gut microbiota. Plays an essential role in antifungal immunity against dissemination of gut fungi: acts by promoting induction of antifungal IgG antibodies response in CX3CR1(+) macrophages to confer protection against disseminated C.albicans or C.auris infection. Also mediates immunity against other pathogens, such as certain bacteria, viruses and parasites; CARD9 signaling is however redundant with other innate immune responses. In response to L.monocytogenes infection, required for the production of inflammatory cytokines activated by intracellular peptidoglycan: acts by connecting NOD2 recognition of peptidoglycan to downstream activation of MAP kinases (MAPK) without activating NF-kappa-B. The polypeptide is Caspase recruitment domain-containing protein 9 (Homo sapiens (Human)).